We begin with the raw amino-acid sequence, 76 residues long: Horsegram inhibitor 1 (76 aa).

7 disulfides stabilise this stretch: cysteine 16–cysteine 70, cysteine 17–cysteine 32, cysteine 20–cysteine 66, cysteine 22–cysteine 30, cysteine 40–cysteine 47, cysteine 44–cysteine 59, and cysteine 49–cysteine 57.

It belongs to the Bowman-Birk serine protease inhibitor family. In terms of assembly, HGI-III exists in a state of equilibrium between monomer, homodimer and trimer, with homodimer being the predominant form. The homodimer is stabilized by the non-covalent interaction between Lys-24 of one subunit and Asp-76 of the other subunit. The homodimer is more thermostable than the monomer. HGGI-I, HGGI-II and HGGI-III exist as monomers. Post-translationally, HGGI-I, HGGI-II and HGGI-III are produced by proteolysis of the N- and C-termini of HGI-III.

Its function is as follows. Inhibitors of trypsin and chymotrypsin. HGGI-III has a higher activity than HGGI-I or HGGI-II. The sequence is that of Horsegram inhibitor 1 from Vigna unguiculata subsp. cylindrica (Horse gram).